The chain runs to 439 residues: GTPase Der (439 aa).

EngA-type G domains are found at residues 2 to 168 and 181 to 357; these read ATVL…EEKG and IKVA…ASYT. Residues 8-15, 55-59, 118-121, 187-194, 234-238, and 300-303 each bind GTP; these read GKPNVGKS, DTCGV, NKTE, GRPNVGKS, DTAGL, and NKWD. Residues 358 to 439 form the KH-like domain; the sequence is TKVPSSAINS…PIFLKFKRSR (82 aa).

It belongs to the TRAFAC class TrmE-Era-EngA-EngB-Septin-like GTPase superfamily. EngA (Der) GTPase family. As to quaternary structure, associates with the 50S ribosomal subunit.

In terms of biological role, GTPase that plays an essential role in the late steps of ribosome biogenesis. This is GTPase Der from Thermotoga petrophila (strain ATCC BAA-488 / DSM 13995 / JCM 10881 / RKU-1).